The chain runs to 472 residues: RING-H2 finger protein ATL13 (472 aa).

The helical transmembrane segment at 51–71 (ILLIIIILSIIFFISGLLHLL) threads the bilayer. Residues 134 to 176 (CAVCLCEFETEDKLRLLPKCSHAFHMDCIDTWLLSHSTCPLCR) form an RING-type; atypical zinc finger. Residues 320-340 (VSTKKQSSKNRGLPGHRTAMS) form a disordered region.

This sequence belongs to the RING-type zinc finger family. ATL subfamily.

Its subcellular location is the membrane. The catalysed reaction is S-ubiquitinyl-[E2 ubiquitin-conjugating enzyme]-L-cysteine + [acceptor protein]-L-lysine = [E2 ubiquitin-conjugating enzyme]-L-cysteine + N(6)-ubiquitinyl-[acceptor protein]-L-lysine.. The protein operates within protein modification; protein ubiquitination. This Arabidopsis thaliana (Mouse-ear cress) protein is RING-H2 finger protein ATL13 (ATL13).